The primary structure comprises 201 residues: Dephospho-CoA kinase (201 aa).

A DPCK domain is found at 4 to 201 (IIGITGGIAS…LEGGRQDDRD (198 aa)). 12 to 17 (ASGKST) contacts ATP.

It belongs to the CoaE family.

It localises to the cytoplasm. The enzyme catalyses 3'-dephospho-CoA + ATP = ADP + CoA + H(+). It functions in the pathway cofactor biosynthesis; coenzyme A biosynthesis; CoA from (R)-pantothenate: step 5/5. Catalyzes the phosphorylation of the 3'-hydroxyl group of dephosphocoenzyme A to form coenzyme A. This chain is Dephospho-CoA kinase, found in Streptococcus pneumoniae (strain ATCC BAA-255 / R6).